Consider the following 519-residue polypeptide: T-complex protein 1 subunit gamma (519 aa).

The protein belongs to the TCP-1 chaperonin family. Component of the T-complex protein 1 (TCP1) complex.

The protein resides in the cytoplasm. Its function is as follows. Molecular chaperone; assists the folding of proteins upon ATP hydrolysis. This chain is T-complex protein 1 subunit gamma (CCT3), found in Encephalitozoon cuniculi (strain GB-M1) (Microsporidian parasite).